Reading from the N-terminus, the 430-residue chain is Endochitinase 46 (430 aa).

The N-terminal stretch at 1–22 (MLSFLGKSVALLAALQATLSSA) is a signal peptide. Positions 23–35 (SPLATEERSIEKR) are excised as a propeptide. Residues 39 to 408 (YANSVYFTNW…GTSHRALGGL (370 aa)) form the GH18 domain. Residues 103–104 (GT) and 130–133 (GGWT) contribute to the chitin site. Catalysis depends on glutamate 172, which acts as the Proton donor. Tyrosine 173 contacts chitin. Asparagine 219 is a glycosylation site (N-linked (GlcNAc...) asparagine). Residues 238-241 (MAYD) and tryptophan 385 each bind chitin.

This sequence belongs to the glycosyl hydrolase 18 family. Chitinase class V subfamily.

The protein localises to the secreted. The catalysed reaction is Random endo-hydrolysis of N-acetyl-beta-D-glucosaminide (1-&gt;4)-beta-linkages in chitin and chitodextrins.. In terms of biological role, secreted chitinase involved in the degradation of chitin, a component of the cell walls of fungi and exoskeletal elements of some animals (including worms and arthropods). Plays a morphogenetic role during apical growth, cell division and differentiation (cell wall morphogenesis). Also acts as an antifungal agent. Involved in the degradation and further assimilation of phytopathogenic fungi, namely mycoparasitism, the major mechanism accounting for the antagonistic activity against phytopathogenic fungi displayed by Trichoderma. This is Endochitinase 46 (chit46) from Trichoderma harzianum (Hypocrea lixii).